We begin with the raw amino-acid sequence, 73 residues long: Translation initiation factor IF-1 (73 aa).

The S1-like domain occupies 1 to 72; that stretch reads MAKEDVIEVE…SRGRITYRYR (72 aa).

This sequence belongs to the IF-1 family. In terms of assembly, component of the 30S ribosomal translation pre-initiation complex which assembles on the 30S ribosome in the order IF-2 and IF-3, IF-1 and N-formylmethionyl-tRNA(fMet); mRNA recruitment can occur at any time during PIC assembly.

Its subcellular location is the cytoplasm. One of the essential components for the initiation of protein synthesis. Stabilizes the binding of IF-2 and IF-3 on the 30S subunit to which N-formylmethionyl-tRNA(fMet) subsequently binds. Helps modulate mRNA selection, yielding the 30S pre-initiation complex (PIC). Upon addition of the 50S ribosomal subunit IF-1, IF-2 and IF-3 are released leaving the mature 70S translation initiation complex. The protein is Translation initiation factor IF-1 of Rubrobacter xylanophilus (strain DSM 9941 / JCM 11954 / NBRC 16129 / PRD-1).